The primary structure comprises 423 residues: Serine--tRNA ligase (423 aa).

L-serine is bound at residue 231-233; sequence TGE. 262 to 264 provides a ligand contact to ATP; the sequence is RSE. An L-serine-binding site is contributed by glutamate 285. Residue 349–352 coordinates ATP; it reads EISS. Serine 385 contributes to the L-serine binding site.

It belongs to the class-II aminoacyl-tRNA synthetase family. Type-1 seryl-tRNA synthetase subfamily. As to quaternary structure, homodimer. The tRNA molecule binds across the dimer.

Its subcellular location is the cytoplasm. It carries out the reaction tRNA(Ser) + L-serine + ATP = L-seryl-tRNA(Ser) + AMP + diphosphate + H(+). It catalyses the reaction tRNA(Sec) + L-serine + ATP = L-seryl-tRNA(Sec) + AMP + diphosphate + H(+). It participates in aminoacyl-tRNA biosynthesis; selenocysteinyl-tRNA(Sec) biosynthesis; L-seryl-tRNA(Sec) from L-serine and tRNA(Sec): step 1/1. Functionally, catalyzes the attachment of serine to tRNA(Ser). Is also able to aminoacylate tRNA(Sec) with serine, to form the misacylated tRNA L-seryl-tRNA(Sec), which will be further converted into selenocysteinyl-tRNA(Sec). This chain is Serine--tRNA ligase, found in Coxiella burnetii (strain CbuK_Q154) (Coxiella burnetii (strain Q154)).